The following is a 38-amino-acid chain: Large ribosomal subunit protein bL36 (38 aa).

Belongs to the bacterial ribosomal protein bL36 family.

This Hahella chejuensis (strain KCTC 2396) protein is Large ribosomal subunit protein bL36.